A 71-amino-acid polypeptide reads, in one-letter code: UPF0434 protein APH_0052 (71 aa).

Basic and acidic residues predominate over residues Arg52 to Ser63. Residues Arg52–Gln71 are disordered.

The protein belongs to the UPF0434 family.

The polypeptide is UPF0434 protein APH_0052 (Anaplasma phagocytophilum (strain HZ)).